Reading from the N-terminus, the 347-residue chain is 5-deoxyribose 1-phosphate isomerase (347 aa).

Substrate-binding positions include 48–50 (RGA), R91, and Q198. The active-site Proton donor is D239. 249 to 250 (NK) contacts substrate.

It belongs to the EIF-2B alpha/beta/delta subunits family. DrdI subfamily.

It carries out the reaction 5-deoxy-alpha-D-ribose 1-phosphate = 5-deoxy-D-ribulose 1-phosphate. It functions in the pathway carbohydrate degradation. Catalyzes the isomerization of 5-deoxy-alpha-D-ribose 1-phosphate to 5-deoxy-D-ribulose 1-phosphate, as part of a 5-deoxyribose salvage pathway that recycles this toxic radical SAM enzyme by-product to mainstream metabolites. The chain is 5-deoxyribose 1-phosphate isomerase from Petrotoga mobilis (strain DSM 10674 / SJ95).